Reading from the N-terminus, the 70-residue chain is Large ribosomal subunit protein eL38 (70 aa).

K4 is covalently cross-linked (Glycyl lysine isopeptide (Lys-Gly) (interchain with G-Cter in SUMO2)). K9 carries the post-translational modification N6-acetyllysine; alternate. K9 is covalently cross-linked (Glycyl lysine isopeptide (Lys-Gly) (interchain with G-Cter in SUMO2); alternate). N6-acetyllysine is present on K67.

Belongs to the eukaryotic ribosomal protein eL38 family. Component of the large ribosomal subunit.

It localises to the cytoplasm. Component of the large ribosomal subunit. The ribosome is a large ribonucleoprotein complex responsible for the synthesis of proteins in the cell. In Mus musculus (Mouse), this protein is Large ribosomal subunit protein eL38 (Rpl38).